Consider the following 460-residue polypeptide: Cysteine--tRNA ligase (460 aa).

Residue Cys28 coordinates Zn(2+). The 'HIGH' region signature appears at 30-40 (NTVYDFCHIGH). The Zn(2+) site is built by Cys209, His234, and Glu238. The 'KMSKS' region motif lies at 266 to 270 (KMSKS). An ATP-binding site is contributed by Lys269.

It belongs to the class-I aminoacyl-tRNA synthetase family. Monomer. Requires Zn(2+) as cofactor.

The protein resides in the cytoplasm. It carries out the reaction tRNA(Cys) + L-cysteine + ATP = L-cysteinyl-tRNA(Cys) + AMP + diphosphate. The protein is Cysteine--tRNA ligase of Marinomonas sp. (strain MWYL1).